Reading from the N-terminus, the 213-residue chain is CDP-diacylglycerol--inositol 3-phosphatidyltransferase (213 aa).

Over methionine 1–asparagine 5 the chain is Cytoplasmic. The helical transmembrane segment at isoleucine 6–phenylalanine 26 threads the bilayer. Position 27 (tyrosine 27) is a topological domain, lumenal. Residues phenylalanine 28–alanine 48 form a helical membrane-spanning segment. The Mg(2+) site is built by aspartate 47 and aspartate 50. At phenylalanine 49 to arginine 73 the chain is on the cytoplasmic side. Glycine 51, arginine 55, and threonine 61 together coordinate a CDP-1,2-diacyl-sn-glycerol. Mg(2+) is bound by residues aspartate 68 and aspartate 72. The Proton acceptor role is filled by aspartate 72. A helical transmembrane segment spans residues cysteine 74 to phenylalanine 94. A topological domain (lumenal) is located at residue glutamine 95. Residues isoleucine 96–glycine 116 traverse the membrane as a helical segment. Topologically, residues serine 117–proline 139 are cytoplasmic. Residues alanine 140–phenylalanine 160 form a helical membrane-spanning segment. Residues serine 161–methionine 174 are Lumenal-facing. The chain crosses the membrane as a helical span at residues glycine 175–isoleucine 195. Over threonine 196 to lysine 213 the chain is Cytoplasmic.

This sequence belongs to the CDP-alcohol phosphatidyltransferase class-I family. The cofactor is Mn(2+). Mg(2+) is required as a cofactor. Detected in placenta (at protein level). Widely expressed. Higher expression in adult liver and skeletal muscle, slightly lower levels seen in pancreas, kidney, lung, placenta, brain, heart, leukocyte, colon, small intestine, ovary, testis, prostate, thymus and spleen. In fetus, expressed in kidney, liver, lung and brain.

It is found in the endoplasmic reticulum membrane. The protein resides in the cell membrane. It catalyses the reaction a CDP-1,2-diacyl-sn-glycerol + myo-inositol = a 1,2-diacyl-sn-glycero-3-phospho-(1D-myo-inositol) + CMP + H(+). With respect to regulation, inhibited by PtdIns (product inhibition), phosphatidylinositol phosphate, and nucleoside di- and tri-phosphates. Catalyzes the biosynthesis of phosphatidylinositol (PtdIns) as well as PtdIns:inositol exchange reaction. May thus act to reduce an excessive cellular PtdIns content. The exchange activity is due to the reverse reaction of PtdIns synthase and is dependent on CMP, which is tightly bound to the enzyme. This chain is CDP-diacylglycerol--inositol 3-phosphatidyltransferase, found in Homo sapiens (Human).